We begin with the raw amino-acid sequence, 178 residues long: uncharacterized protein (178 aa).

A signal peptide spans 1-19 (MKKLLIVTMLFTLALSAQA).

It belongs to the opacity porin family.

This is an uncharacterized protein from Haemophilus influenzae (strain ATCC 51907 / DSM 11121 / KW20 / Rd).